The chain runs to 70 residues: DNA-directed RNA polymerase subunit omega (70 aa).

It belongs to the RNA polymerase subunit omega family. As to quaternary structure, the RNAP catalytic core consists of 2 alpha, 1 beta, 1 beta' and 1 omega subunit. When a sigma factor is associated with the core the holoenzyme is formed, which can initiate transcription.

It catalyses the reaction RNA(n) + a ribonucleoside 5'-triphosphate = RNA(n+1) + diphosphate. Functionally, promotes RNA polymerase assembly. Latches the N- and C-terminal regions of the beta' subunit thereby facilitating its interaction with the beta and alpha subunits. The protein is DNA-directed RNA polymerase subunit omega of Bacillus cereus (strain G9842).